The following is a 363-amino-acid chain: L-serine dehydratase/L-threonine deaminase (363 aa).

Position 2 is an N-acetylalanine (alanine 2). Residue lysine 41 is modified to N6-(pyridoxal phosphate)lysine. The disordered stretch occupies residues 74-98 (RGRSHSGDEQPHVRSQALLPDTPSP). Proline 164 serves as a coordination point for pyridoxal 5'-phosphate.

It belongs to the serine/threonine dehydratase family. Homodimer. It depends on pyridoxal 5'-phosphate as a cofactor. Predominantly expressed in the periportal regions of the liver.

It is found in the cytoplasm. It carries out the reaction L-serine = pyruvate + NH4(+). It catalyses the reaction L-threonine = 2-oxobutanoate + NH4(+). It participates in carbohydrate biosynthesis; gluconeogenesis. Catalyzes the pyridoxal-phosphate-dependent dehydrative deamination of L-threonine and L-serine to ammonia and alpha-ketobutyrate and pyruvate, respectively. The sequence is that of L-serine dehydratase/L-threonine deaminase (Sds) from Rattus norvegicus (Rat).